Reading from the N-terminus, the 272-residue chain is Imidazole glycerol phosphate synthase subunit HisF (272 aa).

Catalysis depends on residues Asp11 and Asp130.

Belongs to the HisA/HisF family. In terms of assembly, heterodimer of HisH and HisF.

The protein resides in the cytoplasm. The enzyme catalyses 5-[(5-phospho-1-deoxy-D-ribulos-1-ylimino)methylamino]-1-(5-phospho-beta-D-ribosyl)imidazole-4-carboxamide + L-glutamine = D-erythro-1-(imidazol-4-yl)glycerol 3-phosphate + 5-amino-1-(5-phospho-beta-D-ribosyl)imidazole-4-carboxamide + L-glutamate + H(+). The protein operates within amino-acid biosynthesis; L-histidine biosynthesis; L-histidine from 5-phospho-alpha-D-ribose 1-diphosphate: step 5/9. Functionally, IGPS catalyzes the conversion of PRFAR and glutamine to IGP, AICAR and glutamate. The HisF subunit catalyzes the cyclization activity that produces IGP and AICAR from PRFAR using the ammonia provided by the HisH subunit. In Methanococcus maripaludis (strain C6 / ATCC BAA-1332), this protein is Imidazole glycerol phosphate synthase subunit HisF.